The sequence spans 373 residues: Putative F-box protein At1g76830 (373 aa).

One can recognise an F-box domain in the interval 4 to 49; that stretch reads ITSFENLPEELKREILLRMSPNSLVTCSRVSKKLASMIRTKSFKEL.

This chain is Putative F-box protein At1g76830, found in Arabidopsis thaliana (Mouse-ear cress).